Consider the following 231-residue polypeptide: Membrane protein YknW (231 aa).

5 helical membrane passes run 38-58 (VWGPLLIVAAIIIVGAVLQSL), 93-113 (GAIIGGIAALFIAPLIYWLCV), 128-148 (LSLFVSLISSLGLLVNGIVAF), 171-191 (LASVLNTFEIFSIWSFVLLAI), and 205-225 (WISAIILFGILVVFSLFSGLI).

As to quaternary structure, interacts with a complex composed of YknX, YknY and YknZ.

The protein resides in the cell membrane. In terms of biological role, part of an unusual four-component transporter, which is required for protection against the killing factor SdpC (sporulation-delaying protein). Has a role in the assembly of the YknXYZ complex. In Bacillus subtilis (strain 168), this protein is Membrane protein YknW (yknW).